A 476-amino-acid chain; its full sequence is Aspartyl/glutamyl-tRNA(Asn/Gln) amidotransferase subunit B (476 aa).

Belongs to the GatB/GatE family. GatB subfamily. As to quaternary structure, heterotrimer of A, B and C subunits.

It carries out the reaction L-glutamyl-tRNA(Gln) + L-glutamine + ATP + H2O = L-glutaminyl-tRNA(Gln) + L-glutamate + ADP + phosphate + H(+). The enzyme catalyses L-aspartyl-tRNA(Asn) + L-glutamine + ATP + H2O = L-asparaginyl-tRNA(Asn) + L-glutamate + ADP + phosphate + 2 H(+). Functionally, allows the formation of correctly charged Asn-tRNA(Asn) or Gln-tRNA(Gln) through the transamidation of misacylated Asp-tRNA(Asn) or Glu-tRNA(Gln) in organisms which lack either or both of asparaginyl-tRNA or glutaminyl-tRNA synthetases. The reaction takes place in the presence of glutamine and ATP through an activated phospho-Asp-tRNA(Asn) or phospho-Glu-tRNA(Gln). This Lactobacillus johnsonii (strain CNCM I-12250 / La1 / NCC 533) protein is Aspartyl/glutamyl-tRNA(Asn/Gln) amidotransferase subunit B.